A 477-amino-acid polypeptide reads, in one-letter code: Alkaline phosphatase (477 aa).

Asp-44 provides a ligand contact to Mg(2+). Asp-44 provides a ligand contact to Zn(2+). Ser-94 functions as the Phosphoserine intermediate in the catalytic mechanism. Asn-124 carries an N-linked (GlcNAc...) asparagine glycan. Positions 155 and 157 each coordinate Mg(2+). An intrachain disulfide couples Cys-165 to Cys-185. Residue Asn-214 is glycosylated (N-linked (GlcNAc...) asparagine). Residue Glu-315 participates in Mg(2+) binding. Positions 320, 324, 361, and 362 each coordinate Zn(2+). Asn-413 carries an N-linked (GlcNAc...) asparagine glycan. Residue His-437 coordinates Zn(2+).

In terms of assembly, homodimer. It depends on Mg(2+) as a cofactor. Zn(2+) is required as a cofactor.

It is found in the cell membrane. The enzyme catalyses a phosphate monoester + H2O = an alcohol + phosphate. The chain is Alkaline phosphatase from Gadus morhua (Atlantic cod).